A 629-amino-acid polypeptide reads, in one-letter code: tRNA uridine 5-carboxymethylaminomethyl modification enzyme MnmG (629 aa).

14-19 (GAGHAG) contributes to the FAD binding site. Residue 274 to 288 (GPRYCPSIEDKVVRF) coordinates NAD(+).

Belongs to the MnmG family. Homodimer. Heterotetramer of two MnmE and two MnmG subunits. The cofactor is FAD.

The protein localises to the cytoplasm. Functionally, NAD-binding protein involved in the addition of a carboxymethylaminomethyl (cmnm) group at the wobble position (U34) of certain tRNAs, forming tRNA-cmnm(5)s(2)U34. The sequence is that of tRNA uridine 5-carboxymethylaminomethyl modification enzyme MnmG from Xylella fastidiosa (strain 9a5c).